Reading from the N-terminus, the 284-residue chain is Tropomyosin Per a 7.0103 (284 aa).

Residues 1 to 266 adopt a coiled-coil conformation; it reads MDAIKKKMQA…EDELVHEKEK (266 aa).

It belongs to the tropomyosin family. As to quaternary structure, homodimer.

Functionally, tropomyosin, in association with the troponin complex, plays a central role in the calcium dependent regulation of muscle contraction. In Periplaneta americana (American cockroach), this protein is Tropomyosin Per a 7.0103.